Consider the following 744-residue polypeptide: 1,4-alpha-glucan branching enzyme GlgB (744 aa).

Residue Asp-415 is the Nucleophile of the active site. Glu-468 acts as the Proton donor in catalysis.

The protein belongs to the glycosyl hydrolase 13 family. GlgB subfamily. As to quaternary structure, monomer.

It carries out the reaction Transfers a segment of a (1-&gt;4)-alpha-D-glucan chain to a primary hydroxy group in a similar glucan chain.. The protein operates within glycan biosynthesis; glycogen biosynthesis. Catalyzes the formation of the alpha-1,6-glucosidic linkages in glycogen by scission of a 1,4-alpha-linked oligosaccharide from growing alpha-1,4-glucan chains and the subsequent attachment of the oligosaccharide to the alpha-1,6 position. In Shewanella frigidimarina (strain NCIMB 400), this protein is 1,4-alpha-glucan branching enzyme GlgB.